Reading from the N-terminus, the 323-residue chain is Putative HTH-type transcriptional regulatory protein Hlac_0273 (323 aa).

The region spanning 132-189 is the HTH cro/C1-type domain; the sequence is LADEREERGWSLGRLATELGVSRRTVSKYEDGMNASIEVAIQLEDLFNEPFSSPVDVL. Positions 143–162 form a DNA-binding region, H-T-H motif; sequence LGRLATELGVSRRTVSKYED. Residues 188–211 form a disordered region; that stretch reads VLDGAGEVRDADPTPSAPETDPDD.

This chain is Putative HTH-type transcriptional regulatory protein Hlac_0273, found in Halorubrum lacusprofundi (strain ATCC 49239 / DSM 5036 / JCM 8891 / ACAM 34).